Reading from the N-terminus, the 402-residue chain is Queuine tRNA-ribosyltransferase-like protein (402 aa).

This sequence belongs to the queuine tRNA-ribosyltransferase family.

This Theileria parva (East coast fever infection agent) protein is Queuine tRNA-ribosyltransferase-like protein.